The primary structure comprises 545 residues: MTTRYIFVTGGVVSSLGKGIAAASLAAILEARGLNVTIMKLDPYINVDPGTMSPTQHGEVFVTEDGAETDLDLGHYERFIRTKMNRRNNFTTGRIYEEVLRKERRGDYLGATIQVIPHITNAIKERVIAGGEGHDVAIVEIGGTVGDIESLPFLESIRQLGAELGRDRTLFMHLTLVPFLGAAGEIKTKPTQHSVKELRSIGIAPDVLVCRGDRAVPANERAKISLFCNVEERAVISLKDVDSIYKIPALLRSQGLDELVIKRFNIDCKEADLSEWENVIYQEANPNGEVTIGMVGKYIELPDAYKSVNEALKHAGLKNRVTVNIKYIDSQTVEAKGDEVLQGLDGILVPGGFGERGVEGKILAAKFARENKLPYFGICLGMQVALIEFARNVAGMADAHSTEFNPASPFPVVGLITEWIDEDGQLELRHEESDLGGTMRLGAQLCHLKEGTKAAEAYKGNTCVERHRHRYEVNNNYVDRLEKAGLIFSGLSSDRKLVEMIELAEHPWFVAGQFHPEFTSTPRDGHPLFEGFIAASLSHQKRILG.

Residues 1–266 are amidoligase domain; sequence MTTRYIFVTG…DELVIKRFNI (266 aa). Ser-14 serves as a coordination point for CTP. Residue Ser-14 coordinates UTP. ATP is bound by residues 15–20 and Asp-72; that span reads SLGKGI. Mg(2+) is bound by residues Asp-72 and Glu-140. Residues 147 to 149, 187 to 192, and Lys-223 contribute to the CTP site; these read DIE and KTKPTQ. UTP contacts are provided by residues 187 to 192 and Lys-223; that span reads KTKPTQ. 239–241 contacts ATP; sequence KDV. Positions 291-542 constitute a Glutamine amidotransferase type-1 domain; the sequence is TIGMVGKYIE…IAASLSHQKR (252 aa). An L-glutamine-binding site is contributed by Gly-352. Cys-379 acts as the Nucleophile; for glutamine hydrolysis in catalysis. L-glutamine contacts are provided by residues 380–383, Glu-403, and Arg-470; that span reads LGMQ. Catalysis depends on residues His-515 and Glu-517.

This sequence belongs to the CTP synthase family. As to quaternary structure, homotetramer.

The catalysed reaction is UTP + L-glutamine + ATP + H2O = CTP + L-glutamate + ADP + phosphate + 2 H(+). It catalyses the reaction L-glutamine + H2O = L-glutamate + NH4(+). The enzyme catalyses UTP + NH4(+) + ATP = CTP + ADP + phosphate + 2 H(+). The protein operates within pyrimidine metabolism; CTP biosynthesis via de novo pathway; CTP from UDP: step 2/2. Allosterically activated by GTP, when glutamine is the substrate; GTP has no effect on the reaction when ammonia is the substrate. The allosteric effector GTP functions by stabilizing the protein conformation that binds the tetrahedral intermediate(s) formed during glutamine hydrolysis. Inhibited by the product CTP, via allosteric rather than competitive inhibition. Its function is as follows. Catalyzes the ATP-dependent amination of UTP to CTP with either L-glutamine or ammonia as the source of nitrogen. Regulates intracellular CTP levels through interactions with the four ribonucleotide triphosphates. The polypeptide is CTP synthase (Shewanella denitrificans (strain OS217 / ATCC BAA-1090 / DSM 15013)).